The following is a 171-amino-acid chain: Superoxide dismutase [Cu-Zn] 2 (171 aa).

A signal peptide spans 1 to 20; sequence MKKLSGVLAGSLLLISASFS. Positions 67, 69, and 85 each coordinate Cu cation. A disulfide bridge connects residues Cys74 and Cys167. Positions 85, 93, 102, and 105 each coordinate Zn(2+). Position 147 (His147) interacts with Cu cation.

It belongs to the Cu-Zn superoxide dismutase family. The cofactor is Cu cation. Zn(2+) is required as a cofactor.

It catalyses the reaction 2 superoxide + 2 H(+) = H2O2 + O2. Destroys radicals which are normally produced within the cells and which are toxic to biological systems. This is Superoxide dismutase [Cu-Zn] 2 (sodC2) from Aquifex aeolicus (strain VF5).